We begin with the raw amino-acid sequence, 158 residues long: SsrA-binding protein (158 aa).

Belongs to the SmpB family.

The protein resides in the cytoplasm. Its function is as follows. Required for rescue of stalled ribosomes mediated by trans-translation. Binds to transfer-messenger RNA (tmRNA), required for stable association of tmRNA with ribosomes. tmRNA and SmpB together mimic tRNA shape, replacing the anticodon stem-loop with SmpB. tmRNA is encoded by the ssrA gene; the 2 termini fold to resemble tRNA(Ala) and it encodes a 'tag peptide', a short internal open reading frame. During trans-translation Ala-aminoacylated tmRNA acts like a tRNA, entering the A-site of stalled ribosomes, displacing the stalled mRNA. The ribosome then switches to translate the ORF on the tmRNA; the nascent peptide is terminated with the 'tag peptide' encoded by the tmRNA and targeted for degradation. The ribosome is freed to recommence translation, which seems to be the essential function of trans-translation. This chain is SsrA-binding protein, found in Caldanaerobacter subterraneus subsp. tengcongensis (strain DSM 15242 / JCM 11007 / NBRC 100824 / MB4) (Thermoanaerobacter tengcongensis).